An 853-amino-acid polypeptide reads, in one-letter code: Cytochrome P450 monooxygenase mpaDE' (853 aa).

Over 1–6 (MESLSL) the chain is Lumenal. A helical membrane pass occupies residues 7-29 (TWITAIAVVLYLVQRYVRSYWRL). The Cytoplasmic segment spans residues 30–853 (KDIPGPVLAK…DIENAIEGQK (824 aa)). Cysteine 449 contributes to the heme binding site.

The protein belongs to the cytochrome P450 family. It depends on heme as a cofactor.

The protein resides in the endoplasmic reticulum membrane. It carries out the reaction 5-methylorsellinate + reduced [NADPH--hemoprotein reductase] + O2 = 4,6-dihydroxy-2-(hydroxymethyl)-3-methylbenzoate + oxidized [NADPH--hemoprotein reductase] + H2O + H(+). It catalyses the reaction 4,6-dihydroxy-2-(hydroxymethyl)-3-methylbenzoate + H(+) = 5,7-dihydroxy-4-methylphthalide + H2O. Its pathway is secondary metabolite biosynthesis; terpenoid biosynthesis. In terms of biological role, cytochrome P450 monooxygenase; part of the gene cluster that mediates the biosynthesis of mycophenolic acid (MPA), the first isolated antibiotic natural product in the world obtained from a culture of Penicillium brevicompactum in 1893. MpaDE' is an endoplasmic reticulum-bound enzyme that catalyzes the conversion of 5-methylorsellinic acid (5MOA) into the phthalide compound 5,7-dihydroxy-4,6-dimethylphthalide (DHMP). MpaDE' first catalyzes hydroxylation of 5-MOA to 4,6-dihydroxy-2-(hydroxymethyl)-3-methylbenzoic acid (DHMB), and then acts as a lactone synthase that catalyzes the ring closure to convert DHMB into DHMP. The first step of the pathway is the synthesis of 5-methylorsellinic acid (5MOA) by the cytosolic polyketide synthase mpaC. 5MOA is then converted to the phthalide compound 5,7-dihydroxy-4,6-dimethylphthalide (DHMP) by the endoplasmic reticulum-bound cytochrome P450 monooxygenase mpaDE. MpaDE first catalyzes hydroxylation of 5-MOA to 4,6-dihydroxy-2-(hydroxymethyl)-3-methylbenzoic acid (DHMB). MpaDE then acts as a lactone synthase that catalyzes the ring closure to convert DHMB into DHMP. The next step is the prenylation of DHMP by the Golgi apparatus-associated prenyltransferase mpaA to yield farnesyl-DHMP (FDHMP). The ER-bound oxygenase mpaB then mediates the oxidative cleavage the C19-C20 double bond in FDHMP to yield FDHMP-3C via a mycophenolic aldehyde intermediate. The O-methyltransferase mpaG catalyzes the methylation of FDHMP-3C to yield MFDHMP-3C. After the cytosolic methylation of FDHMP-3C, MFDHMP-3C enters into peroxisomes probably via free diffusion due to its low molecular weight. Upon a peroxisomal CoA ligation reaction, catalyzed by a beta-oxidation component enzyme acyl-CoA ligase ACL891, MFDHMP-3C-CoA would then be restricted to peroxisomes for the following beta-oxidation pathway steps. The peroxisomal beta-oxidation machinery than converts MFDHMP-3C-CoA into MPA_CoA, via a beta-oxidation chain-shortening process. Finally mpaH acts as a peroxisomal acyl-CoA hydrolase with high substrate specificity toward MPA-CoA to release the final product MPA. This is Cytochrome P450 monooxygenase mpaDE' from Penicillium brevicompactum.